The following is a 150-amino-acid chain: UPF0208 membrane protein VV1_2222 (150 aa).

The next 2 membrane-spanning stretches (helical) occupy residues 42 to 62 and 70 to 90; these read FGIK…MAFN and AIVM…WLGH.

This sequence belongs to the UPF0208 family.

The protein resides in the cell inner membrane. This Vibrio vulnificus (strain CMCP6) protein is UPF0208 membrane protein VV1_2222.